Here is a 385-residue protein sequence, read N- to C-terminus: MDCNNGCSAEGTGEGGSKEPVETFKAEDLIITRATILKEKPDPSTLVFGTVFTDHMLTVEWSLELGWEKPRIKPLQNLSLHPGSSALHYAVELFEGLKAFRGVDNKIRLFRPNLNMDRMYRSAMRATLPAFDKKELLECIQQLVKLDEEWVPYSTSASLYIRPTFIGTEPSLGVKKPTKALLFVILSPVGPYFSSGSFNPVSLWANPKYVRAWKGGTGDCKMGGNYGSSLFAQCEAVENACQQVLWLYGEENQITEVGTMNLFLYWINEDGEEELATPPLDGIILPGVMRQSILDLAHKWGEFKVSERYLTMDDLTTAVEENRVREMFGSGTACVVCPVSTILYKDETIHIPTMENGPKLASRILEKLTDIQYGREESDWTITVA.

Lys-221 carries the N6-(pyridoxal phosphate)lysine modification.

It belongs to the class-IV pyridoxal-phosphate-dependent aminotransferase family. As to quaternary structure, homodimer. The cofactor is pyridoxal 5'-phosphate. Expressed in muscles.

It is found in the cytoplasm. The catalysed reaction is L-leucine + 2-oxoglutarate = 4-methyl-2-oxopentanoate + L-glutamate. The enzyme catalyses L-isoleucine + 2-oxoglutarate = (S)-3-methyl-2-oxopentanoate + L-glutamate. It catalyses the reaction L-valine + 2-oxoglutarate = 3-methyl-2-oxobutanoate + L-glutamate. Catalyzes the first reaction in the catabolism of the essential branched chain amino acids leucine, isoleucine, and valine. In Ovis aries (Sheep), this protein is Branched-chain-amino-acid aminotransferase, cytosolic (BCAT1).